Consider the following 532-residue polypeptide: Alkaline phosphatase (532 aa).

The tract at residues 1–20 is disordered; that stretch reads MASERDPLLPVHGEGPESPS. Residues 27–47 form a helical; Signal-anchor for type II membrane protein membrane-spanning segment; the sequence is WIKHGILLILVLSTVIFFYFF. Asp68 provides a ligand contact to Mg(2+). Asp68 provides a ligand contact to Zn(2+). The active-site Phosphoserine intermediate is the Ser115. Residues Asp166, Thr168, and Glu306 each coordinate Mg(2+). Positions 311, 315, 352, 353, and 456 each coordinate Zn(2+).

It belongs to the alkaline phosphatase family. Requires Mg(2+) as cofactor. It depends on Zn(2+) as a cofactor.

The protein localises to the membrane. It catalyses the reaction a phosphate monoester + H2O = an alcohol + phosphate. The polypeptide is Alkaline phosphatase (Schizosaccharomyces pombe (strain 972 / ATCC 24843) (Fission yeast)).